Consider the following 1198-residue polypeptide: DNA polymerase II large subunit (1198 aa).

Disordered regions lie at residues 281 to 332 (YKTG…PQKK) and 534 to 553 (HWAE…AAES). The span at 286–319 (DTDEADADSDDGTDEDAADDSDIDDSSAGDEEAD) shows a compositional bias: acidic residues.

Belongs to the archaeal DNA polymerase II family. Heterodimer of a large subunit and a small subunit.

The enzyme catalyses DNA(n) + a 2'-deoxyribonucleoside 5'-triphosphate = DNA(n+1) + diphosphate. It catalyses the reaction Exonucleolytic cleavage in the 3'- to 5'-direction to yield nucleoside 5'-phosphates.. Possesses two activities: a DNA synthesis (polymerase) and an exonucleolytic activity that degrades single-stranded DNA in the 3'- to 5'-direction. Has a template-primer preference which is characteristic of a replicative DNA polymerase. This is DNA polymerase II large subunit from Natronomonas pharaonis (strain ATCC 35678 / DSM 2160 / CIP 103997 / JCM 8858 / NBRC 14720 / NCIMB 2260 / Gabara) (Halobacterium pharaonis).